A 418-amino-acid chain; its full sequence is Tyrosine--tRNA ligase (418 aa).

L-tyrosine is bound at residue Y34. A 'HIGH' region motif is present at residues 39–48 (PTADSLHLGH). L-tyrosine contacts are provided by Y169 and Q173. A 'KMSKS' region motif is present at residues 229 to 233 (KFGKS). K232 is a binding site for ATP. In terms of domain architecture, S4 RNA-binding spans 352 to 418 (NNIVELLVSS…GKKKYFVLTY (67 aa)).

Belongs to the class-I aminoacyl-tRNA synthetase family. TyrS type 1 subfamily. In terms of assembly, homodimer.

The protein localises to the cytoplasm. The enzyme catalyses tRNA(Tyr) + L-tyrosine + ATP = L-tyrosyl-tRNA(Tyr) + AMP + diphosphate + H(+). Catalyzes the attachment of tyrosine to tRNA(Tyr) in a two-step reaction: tyrosine is first activated by ATP to form Tyr-AMP and then transferred to the acceptor end of tRNA(Tyr). The chain is Tyrosine--tRNA ligase from Streptococcus pneumoniae (strain ATCC BAA-255 / R6).